The primary structure comprises 796 residues: MDAENATWRKEFMWNNDEKRAEMGTKMFCDVSPHIMLNSHGVAEKMASGSKGMDFWEYPLPQLEIIILSIFLLWRLFDMLFKKLGVPIPKFTSMMLVGAVLSEMFGSMQIPCLKHIFIHYNQYMTKVPDTIGAFAFVLDWFLRGVTTDVGIMKKSGTKSVVIGITSMIIPWQIGKLLYSSREKSSILTMTEMEYTVMTFTMSMTPFTCVNMLLTDLKIVHTDFGQIAQSAGMVTDLLAFFLTVSAYVSRDETQGVKMGLAFMAFFIFVYLVRQFMLWVIRHTPEGAPVKNVYLYIGLLLAYLSYLYWSRFLFFGPLGAFALGLAVPNGPPLGSVFIQKFDSFNEGIFLPLFGSLSMIKLDWSFLRKEFGNGRHLHGHMYECFSFLPIVYIAKFATSFLAALATKIPLRDSIILGVIMGTKSSFELGYVLTAFEKDRISLEVLSLLGVYILVNSLLTPMAIHFLYDRSKRFVCYGRRNLKEKPEMQTLVCINKPDNITSMISLLRATSPSKDSPMECCVLHLIELLGQATPTFISHQLQKPKPGSRSYSENVISSFQLFQEVYWDSASINMFTSLTSAKEMHEQICWFALSQGSNLILLSFHRTWEPNGNVIISDDQTLRSLNLNVLKRAPCSVGIFVYRKPIWQTKALESPCRVCLIYVGGNDDKEALALADHMRGNQQVILTVLRLIPTSYADESSLRIHSQMVDMNRHEDQRPGDKSTIIDWTVGDGTETSKILHSVSYDYDLFIVGRRSGVGTTVTRGLGDWMEFEELGVIGDLLASEYFPSRASVLVVQQQE.

Transmembrane regions (helical) follow at residues aspartate 54 to tryptophan 74, serine 93 to leucine 113, isoleucine 131 to isoleucine 151, serine 159 to serine 179, tyrosine 194 to leucine 213, phenylalanine 223 to valine 243, leucine 259 to isoleucine 279, glycine 285 to leucine 305, phenylalanine 310 to proline 330, glutamate 344 to leucine 364, phenylalanine 382 to alanine 402, isoleucine 411 to alanine 431, and leucine 444 to tyrosine 464.

The protein belongs to the monovalent cation:proton antiporter 2 (CPA2) transporter (TC 2.A.37) family. CHX (TC 2.A.37.4) subfamily. Preferentially expressed in pollen.

It localises to the membrane. Its function is as follows. May operate as a cation/H(+) antiporter. This chain is Cation/H(+) antiporter 6B (CHX6b), found in Arabidopsis thaliana (Mouse-ear cress).